The following is a 328-amino-acid chain: Probable cell division protein WhiA (328 aa).

A DNA-binding region (H-T-H motif) is located at residues Ser-275–Glu-308.

It belongs to the WhiA family.

Functionally, involved in cell division and chromosome segregation. This Corynebacterium jeikeium (strain K411) protein is Probable cell division protein WhiA.